Consider the following 107-residue polypeptide: UPF0145 protein YbjQ (107 aa).

This sequence belongs to the UPF0145 family.

The sequence is that of UPF0145 protein YbjQ from Salmonella dublin (strain CT_02021853).